A 494-amino-acid chain; its full sequence is Bifunctional protein HldE (494 aa).

The ribokinase stretch occupies residues 1–334 (MPTPILDFDA…RKILPHAYLA (334 aa)). 209–212 (NRKE) is an ATP binding site. The active site involves Asp-279. The interval 362–494 (FTNGCFDILH…LVHRARGGAK (133 aa)) is cytidylyltransferase.

The protein in the N-terminal section; belongs to the carbohydrate kinase PfkB family. This sequence in the C-terminal section; belongs to the cytidylyltransferase family. Homodimer.

The enzyme catalyses D-glycero-beta-D-manno-heptose 7-phosphate + ATP = D-glycero-beta-D-manno-heptose 1,7-bisphosphate + ADP + H(+). The catalysed reaction is D-glycero-beta-D-manno-heptose 1-phosphate + ATP + H(+) = ADP-D-glycero-beta-D-manno-heptose + diphosphate. It functions in the pathway nucleotide-sugar biosynthesis; ADP-L-glycero-beta-D-manno-heptose biosynthesis; ADP-L-glycero-beta-D-manno-heptose from D-glycero-beta-D-manno-heptose 7-phosphate: step 1/4. The protein operates within nucleotide-sugar biosynthesis; ADP-L-glycero-beta-D-manno-heptose biosynthesis; ADP-L-glycero-beta-D-manno-heptose from D-glycero-beta-D-manno-heptose 7-phosphate: step 3/4. In terms of biological role, catalyzes the phosphorylation of D-glycero-D-manno-heptose 7-phosphate at the C-1 position to selectively form D-glycero-beta-D-manno-heptose-1,7-bisphosphate. Its function is as follows. Catalyzes the ADP transfer from ATP to D-glycero-beta-D-manno-heptose 1-phosphate, yielding ADP-D-glycero-beta-D-manno-heptose. This chain is Bifunctional protein HldE, found in Bradyrhizobium diazoefficiens (strain JCM 10833 / BCRC 13528 / IAM 13628 / NBRC 14792 / USDA 110).